We begin with the raw amino-acid sequence, 789 residues long: MSLKRNIRRLDSIVPTAGREGSDIQFNLYKGRGVAVFTSGGDSQGMNGAVHSVVRMGIYLGCKVCFINEGYQGMVDGGDNIVEASWNSGSDIIQKGGTIIGSARCTDLRQREGRMKAAYNLIEKGITNLVVIGGDGSLIGANQFRKDWPGLVKELVDTKKITPEAAKSYPNIQIVGLVGSIDNDFCGTDMTIGTDSALQRIIESIDAVVATAQSHQRAFVVEVMGRHCGYLALVAALACEADFCFIPEWPPPVNWREILCKKLQEMRAEGQRLNIIVVAEDDDRDGTPISSDLVKDVVAKTLKYDTRVTVLGHVQRGGSPSAFDRLLGCRMGAEAVLALMEMNEESEPCVISIMVTRWYVPLMQCVERTKAVQKAMSEKDWELAVKLRGRSFQRNLETYKLLTKLRTVEKDNLSGGQNFNVAVMNVGAPAGGMNAAVRSFVRMAIVPSLYSLRYEDSFEGLANGAFKKFQWGDVTNWVMHGGSFLGTQKQLPNEKNVPLIAEQLRKHNIQALLLVGGFEAYHSTLILSKNREKYPEFCIPLCVIPCTISNNVPGTSISLGSDTAINEICTMIDKIKQSATGTKRRVFIIETMGGYCGYLATLSALASGADNAYIFEEKFTVEISLRRGSHRCKMAQGVQRYLIVRNEYANKNFTTEFVKQLFAEEGKGEFSTRINILGHAQQGGSPTPFDRNMGTKLAARALEYIITQIKESMVNGVVSTKSPERATLLGLTGRRVVFTPVEELAAETDFDKRLPCDQWWLKLRPLLRILAKHTSIYHTEAMEDTEDYD.

The segment at 1–404 (MSLKRNIRRL…NLETYKLLTK (404 aa)) is N-terminal catalytic PFK domain 1. Residues G41, 104 to 105 (RC), and 134 to 137 (GDGS) each bind ATP. Position 135 (D135) interacts with Mg(2+). Substrate is bound by residues 180–182 (SID), R217, 224–226 (MGR), E280, R307, and 313–316 (HVQR). The active-site Proton acceptor is the D182. The tract at residues 405 to 419 (LRTVEKDNLSGGQNF) is interdomain linker. Residues 420–789 (NVAVMNVGAP…EAMEDTEDYD (370 aa)) form a C-terminal regulatory PFK domain 2 region. Beta-D-fructose 2,6-bisphosphate is bound by residues K489, 547 to 551 (TISNN), R585, 592 to 594 (MGG), E647, R673, 679 to 682 (HAQQ), and R753.

The protein belongs to the phosphofructokinase type A (PFKA) family. ATP-dependent PFK group I subfamily. Eukaryotic two domain clade 'E' sub-subfamily. Homotetramer. Mg(2+) serves as cofactor.

It is found in the cytoplasm. The enzyme catalyses beta-D-fructose 6-phosphate + ATP = beta-D-fructose 1,6-bisphosphate + ADP + H(+). The protein operates within carbohydrate degradation; glycolysis; D-glyceraldehyde 3-phosphate and glycerone phosphate from D-glucose: step 3/4. With respect to regulation, allosterically activated by ADP, AMP, or fructose 2,6-bisphosphate, and allosterically inhibited by ATP or citrate. Functionally, catalyzes the phosphorylation of D-fructose 6-phosphate to fructose 1,6-bisphosphate by ATP, the first committing step of glycolysis. The sequence is that of ATP-dependent 6-phosphofructokinase (PFK) from Haemonchus contortus (Barber pole worm).